The following is an 867-amino-acid chain: Nitrate reductase [NADPH] (867 aa).

Residues 38 to 58 form a disordered region; the sequence is DIPLPPPSKEPTEVLSIDKPT. Cysteine 152 is a binding site for Mo-molybdopterin. Positions 514 to 589 constitute a Cytochrome b5 heme-binding domain; it reads NRIIDLQEFK…MPDYHIGTMD (76 aa). Heme is bound by residues histidine 549 and histidine 572. Residues 615–726 enclose the FAD-binding FR-type domain; the sequence is KSWTKATLVK…KGPTGRFEYL (112 aa). Residues 669–672, 686–690, phenylalanine 691, 700–702, and threonine 753 each bind FAD; these read RSYT, LVKIY, and KMT. Position 837–846 (837–846) interacts with NADP(+); sequence MVLICGPEAM.

Belongs to the nitrate reductase family. In terms of assembly, homodimer. FAD serves as cofactor. The cofactor is heme. Requires Mo-molybdopterin as cofactor.

It carries out the reaction nitrite + NADP(+) + H2O = nitrate + NADPH + H(+). Its function is as follows. Nitrate reductase is a key enzyme involved in the first step of nitrate assimilation in plants, fungi and bacteria. This chain is Nitrate reductase [NADPH] (niaD), found in Aspergillus niger.